The following is a 149-amino-acid chain: Transcriptional repressor NrdR (149 aa).

The segment at 3-34 (CPFCSIQETKVIDSRLVADGHQVRRRRECTMC) is a zinc-finger region. The 91-residue stretch at 49–139 (PRVVKRDGSR…VYRSFEDIRE (91 aa)) folds into the ATP-cone domain.

It belongs to the NrdR family. Requires Zn(2+) as cofactor.

Negatively regulates transcription of bacterial ribonucleotide reductase nrd genes and operons by binding to NrdR-boxes. The sequence is that of Transcriptional repressor NrdR from Pseudoalteromonas atlantica (strain T6c / ATCC BAA-1087).